Reading from the N-terminus, the 222-residue chain is Phosphoglycolate phosphatase (222 aa).

Asp12 (nucleophile) is an active-site residue. Residues Asp12, Asp14, and Asp175 each contribute to the Mg(2+) site.

The protein belongs to the HAD-like hydrolase superfamily. CbbY/CbbZ/Gph/YieH family. Mg(2+) serves as cofactor.

It carries out the reaction 2-phosphoglycolate + H2O = glycolate + phosphate. The protein operates within organic acid metabolism; glycolate biosynthesis; glycolate from 2-phosphoglycolate: step 1/1. In terms of biological role, specifically catalyzes the dephosphorylation of 2-phosphoglycolate. Is involved in the dissimilation of the intracellular 2-phosphoglycolate formed during the DNA repair of 3'-phosphoglycolate ends, a major class of DNA lesions induced by oxidative stress. The polypeptide is Phosphoglycolate phosphatase (Chromobacterium violaceum (strain ATCC 12472 / DSM 30191 / JCM 1249 / CCUG 213 / NBRC 12614 / NCIMB 9131 / NCTC 9757 / MK)).